A 66-amino-acid polypeptide reads, in one-letter code: Cell division protein ZapB (66 aa).

A coiled-coil region spans residues 3 to 59 (LELLSQLETKIQATLENIELLKMELEEEKQKSTQLAEKNQKLQQDLNSWSDKVNGLV).

Belongs to the ZapB family. Homodimer. The ends of the coiled-coil dimer bind to each other, forming polymers. Interacts with FtsZ.

Its subcellular location is the cytoplasm. Its function is as follows. Non-essential, abundant cell division factor that is required for proper Z-ring formation. It is recruited early to the divisome by direct interaction with FtsZ, stimulating Z-ring assembly and thereby promoting cell division earlier in the cell cycle. Its recruitment to the Z-ring requires functional FtsA or ZipA. This is Cell division protein ZapB from Shewanella denitrificans (strain OS217 / ATCC BAA-1090 / DSM 15013).